A 179-amino-acid polypeptide reads, in one-letter code: Phospholipase A2 (179 aa).

The signal sequence occupies residues 1-21 (MHALRSSVLALWLCLHVSVRA). Positions 22–39 (WMTYRSANGLDEYEPEDR) are excised as a propeptide. Residues W47, G49, and G51 each contribute to the Ca(2+) site. 5 disulfide bridges follow: C48–C70, C69–C109, C76–C102, C100–C133, and C142–C150. Residue H73 is part of the active site. D74 is a Ca(2+) binding site. D103 is a catalytic residue. N-linked (GlcNAc...) asparagine glycosylation occurs at N112.

Requires Ca(2+) as cofactor. In terms of tissue distribution, expressed by the venom gland.

It is found in the secreted. It catalyses the reaction a 1,2-diacyl-sn-glycero-3-phosphocholine + H2O = a 1-acyl-sn-glycero-3-phosphocholine + a fatty acid + H(+). Its function is as follows. PLA2 catalyzes the calcium-dependent hydrolysis of the 2-acyl groups in 3-sn-phosphoglycerides. This is Phospholipase A2 from Xylocopa appendiculata circumvolans (Japanese carpenter bee).